The sequence spans 304 residues: MYYGFDMGGTKIELGVFDAELNKVWQKRVPTPRNNYDDLLAMLIDLVHEADAQVGVQGSVGIGVPGIQTGDEGALFTANLPATMGKPLRIDLSQRLQRDVRISNDANCFVLSEAWDAEFRSYPVVLGLILGTGLGGGLVINGRPVDGRNGIAGEFGHLRLPSDALDIIGVDIPRVKCGCGQFGCIENYISGRGFEWLYEHLYGEALPAVTIIRHYRGGEEKALEFVDRFMDLLAACLGNLLTLFDPHLLVLGGGLSNFDEIYQILPTRLPSRLLPIAKLPRIEKARHGDAGGVRGAALLHLMDN.

Residues 4 to 11 and 133 to 140 each bind ATP; these read GFDMGGTK and GLGGGLVI. 4 residues coordinate Zn(2+): His157, Cys177, Cys179, and Cys184.

This sequence belongs to the ROK (NagC/XylR) family. NagK subfamily.

The catalysed reaction is N-acetyl-D-glucosamine + ATP = N-acetyl-D-glucosamine 6-phosphate + ADP + H(+). The protein operates within cell wall biogenesis; peptidoglycan recycling. In terms of biological role, catalyzes the phosphorylation of N-acetyl-D-glucosamine (GlcNAc) derived from cell-wall degradation, yielding GlcNAc-6-P. This Pectobacterium atrosepticum (strain SCRI 1043 / ATCC BAA-672) (Erwinia carotovora subsp. atroseptica) protein is N-acetyl-D-glucosamine kinase.